A 602-amino-acid chain; its full sequence is MLILLKKAVKLKIIRPIDFYFSQFIAQKNNIVMLVAACVSYESSRGYISLPIKYFEKHYFFSSSNEVFIKKILTLLEKKINWPVELLKHASIGNGGTSTPLVLHKKKIYLYKMWKSESNIFNYLYTKNKKNKINQKKCSKILENLFPQKNMSFQKIAVALTLINNITFIIGGPGTGKTTTILKIIIALIKSSKKSIKIQLSAPTGKATTHLNEILKNNIFDLYFSEKEKCSLPSTATTIHQLLGIQKISQKSFFNKSNCLDLDVLIIDEISMVDILMMEKILSSISKNTKLIFIGDHNQLGPIESGSILRKICYYANDGYSFKSMISIEKLTQYKLCKKINKKTTNFISDNICVLNKNYRFNKNSGIYTLSNAIFKKKTRIIESLFDNSIKNIFFYETNSSEQYKKMIKNICLNYEDFWEKIYKKATMKEIIESFQNYQVLCILHDGLFGVNIINKKLEENMYKKNIIKYFYIDGEEWYIGKPIMIINNNRALNVSNGNIGITNINKNGILQVSFLKENNTINNIPVKILRNYKTAWAITVHKSQGSEFMNTALILPNFNSHILNKDTLYTGITRSRKILSIFSDKKIFLNTIFKNTNKILF.

ATP is bound at residue 171–178 (GGPGTGKT).

The protein belongs to the RecD family. Heterotrimer of RecB, RecC and RecD. All subunits contribute to DNA-binding.

The enzyme catalyses Couples ATP hydrolysis with the unwinding of duplex DNA at the replication fork by translocating in the 5'-3' direction. This creates two antiparallel DNA single strands (ssDNA). The leading ssDNA polymer is the template for DNA polymerase III holoenzyme which synthesizes a continuous strand.. The catalysed reaction is ATP + H2O = ADP + phosphate + H(+). Its function is as follows. A helicase/nuclease that prepares dsDNA breaks (DSB) for recombinational DNA repair. Binds to DSBs and unwinds DNA via a highly rapid and processive ATP-dependent bidirectional helicase activity. Unwinds dsDNA until it encounters a Chi (crossover hotspot instigator) sequence from the 3' direction. Cuts ssDNA a few nucleotides 3' to the Chi site. The properties and activities of the enzyme are changed at Chi. The Chi-altered holoenzyme produces a long 3'-ssDNA overhang and facilitates RecA-binding to the ssDNA for homologous DNA recombination and repair. Holoenzyme degrades any linearized DNA that is unable to undergo homologous recombination. In the holoenzyme this subunit has ssDNA-dependent ATPase and 5'-3' helicase activity. When added to pre-assembled RecBC greatly stimulates nuclease activity and augments holoenzyme processivity. Negatively regulates the RecA-loading ability of RecBCD. In Buchnera aphidicola subsp. Acyrthosiphon pisum (strain APS) (Acyrthosiphon pisum symbiotic bacterium), this protein is RecBCD enzyme subunit RecD.